Consider the following 258-residue polypeptide: Large ribosomal subunit protein bL19m (258 aa).

A disordered region spans residues 235-258 (SKGLTGGVGGGGGKQKGQESKKKN). A compositionally biased stretch (gly residues) spans 238–249 (LTGGVGGGGGKQ).

This sequence belongs to the bacterial ribosomal protein bL19 family. As to quaternary structure, component of the mitochondrial large ribosomal subunit (mt-LSU). Mature N.crassa 74S mitochondrial ribosomes consist of a small (37S) and a large (54S) subunit. The 37S small subunit contains a 16S ribosomal RNA (16S mt-rRNA) and 32 different proteins. The 54S large subunit contains a 23S rRNA (23S mt-rRNA) and 42 different proteins.

The protein localises to the mitochondrion. Functionally, component of the mitochondrial ribosome (mitoribosome), a dedicated translation machinery responsible for the synthesis of mitochondrial genome-encoded proteins, including at least some of the essential transmembrane subunits of the mitochondrial respiratory chain. The mitoribosomes are attached to the mitochondrial inner membrane and translation products are cotranslationally integrated into the membrane. In Neurospora crassa (strain ATCC 24698 / 74-OR23-1A / CBS 708.71 / DSM 1257 / FGSC 987), this protein is Large ribosomal subunit protein bL19m (img1).